Reading from the N-terminus, the 391-residue chain is Putative penicillin-binding protein PbpX (391 aa).

The chain crosses the membrane as a helical span at residues 21-40 (GKLLFGLLAVMVCITIWNAL). The segment at 44–76 (SEENEPSQETAAVSNTDQKKEVKKKTAKKSEEQ) is disordered. Positions 50–59 (SQETAAVSNT) are enriched in polar residues.

It belongs to the beta-lactamase family.

Its subcellular location is the cell membrane. The polypeptide is Putative penicillin-binding protein PbpX (pbpX) (Bacillus subtilis (strain 168)).